The following is a 148-amino-acid chain: Calmodulin (148 aa).

Ala-2 is modified (N-acetylalanine). EF-hand domains are found at residues 8–43 (DQISEFKEAFSLFDKDGDGCITTKELGTVMRSLGQN), 44–79 (PTEAELQDMINEVDRDGNGTIDFPEFLNLMARKMKD), 81–116 (DSEEELKEAFRVFDKDQNGFISAAELRHVMTNLGEK), and 116–148 (KLTDEVDEMIREADVDGDGQINYEEFVKVMMAK). Ca(2+) is bound by residues Asp-21, Asp-23, Asp-25, Cys-27, Glu-32, Asp-57, Asp-59, Asn-61, Thr-63, Glu-68, Asp-94, Asp-96, Asn-98, and Glu-105. Lys-116 is subject to N6,N6,N6-trimethyllysine. Asp-129, Asp-131, Asp-133, Gln-135, and Glu-140 together coordinate Ca(2+).

The protein belongs to the calmodulin family.

Its function is as follows. Calmodulin mediates the control of a large number of enzymes, ion channels and other proteins by Ca(2+). Among the enzymes to be stimulated by the calmodulin-Ca(2+) complex are a number of protein kinases and phosphatases. The sequence is that of Calmodulin (CAMF1) from Fagus sylvatica (Beechnut).